The chain runs to 355 residues: MADEKENCVRMTRAATKRKASMEAAIDKERINKKRVVLGELPNLSNIKKSRKATTKQKKKSVSIPTIETLNSDIDTRSDDPQMCGPYVTSIFEYLRQLEVKSRPLVDYIEKIQKDVTSNMRGVLVDWLVEVAEEYKLLSDTLYLAVSYIDRFLSLKTVNKQRLQLLGVTSMLIASKYEEITPPNVDDFCYITDNTYTKQEIVKMEADILLALQFELGNPTSNTFLRRFTRVAQEDFEMSHLQMEFLCSYLSELSMLDYQSVKFLPSTVAASAVFLARFIIRPKQHPWNVMLEEYTRYKAGDLKECVAMIHDLYLSRKCGALEAIREKYKQHKFKCVATMPVSPELPLTVFEDVNI.

It belongs to the cyclin family. Cyclin AB subfamily.

This is Putative cyclin-A3-1 (CYCA3-1) from Arabidopsis thaliana (Mouse-ear cress).